The primary structure comprises 920 residues: Isoleucine--tRNA ligase (920 aa).

The 'HIGH' region motif lies at Pro58–His68. Glu569 is a binding site for L-isoleucyl-5'-AMP. Residues Lys610–Ser614 carry the 'KMSKS' region motif. An ATP-binding site is contributed by Lys613. 4 residues coordinate Zn(2+): Cys895, Cys898, Cys910, and Cys913.

The protein belongs to the class-I aminoacyl-tRNA synthetase family. IleS type 1 subfamily. Monomer. It depends on Zn(2+) as a cofactor.

The protein localises to the cytoplasm. The catalysed reaction is tRNA(Ile) + L-isoleucine + ATP = L-isoleucyl-tRNA(Ile) + AMP + diphosphate. Its function is as follows. Catalyzes the attachment of isoleucine to tRNA(Ile). As IleRS can inadvertently accommodate and process structurally similar amino acids such as valine, to avoid such errors it has two additional distinct tRNA(Ile)-dependent editing activities. One activity is designated as 'pretransfer' editing and involves the hydrolysis of activated Val-AMP. The other activity is designated 'posttransfer' editing and involves deacylation of mischarged Val-tRNA(Ile). The polypeptide is Isoleucine--tRNA ligase (Helicobacter pylori (strain Shi470)).